The sequence spans 267 residues: Putative phosphatase bbp_030 (267 aa).

D8 serves as the catalytic Nucleophile. D8 lines the Mg(2+) pocket. L9 is a binding site for phosphate. Mg(2+) is bound at residue D10. Residues 42–43 and K191 each bind phosphate; that span reads TG. A Mg(2+)-binding site is contributed by D214. Phosphate is bound at residue N217.

It belongs to the HAD-like hydrolase superfamily. Cof family. Requires Mg(2+) as cofactor.

This is Putative phosphatase bbp_030 from Buchnera aphidicola subsp. Baizongia pistaciae (strain Bp).